The chain runs to 585 residues: Arginine--tRNA ligase (585 aa).

The 'HIGH' region motif lies at 127 to 137 (PNTNKPLHVGH).

It belongs to the class-I aminoacyl-tRNA synthetase family. Monomer.

It is found in the cytoplasm. The enzyme catalyses tRNA(Arg) + L-arginine + ATP = L-arginyl-tRNA(Arg) + AMP + diphosphate. The chain is Arginine--tRNA ligase (argS) from Borreliella burgdorferi (strain ATCC 35210 / DSM 4680 / CIP 102532 / B31) (Borrelia burgdorferi).